Reading from the N-terminus, the 493-residue chain is Malonyl-CoA decarboxylase, mitochondrial (493 aa).

The N-terminal 39 residues, 1–39, are a transit peptide targeting the mitochondrion; sequence MRGFGPGLTARRLLPLRLPPRPPGPRLASGQAAGALERA. Residues 40 to 190 are alpha-helical domain; it reads MDELLRRAVP…VLKGMLSEWF (151 aa). An N6-acetyllysine modification is found at lysine 59. The residue at position 168 (lysine 168) is an N6-acetyllysine; alternate. At lysine 168 the chain carries N6-succinyllysine; alternate. The tract at residues 191 to 493 is catalytic domain; sequence SSGFLNLERV…VAQFQKNSKL (303 aa). Lysine 211 carries the N6-acetyllysine modification. Lysine 222 is subject to N6-succinyllysine. Malonyl-CoA is bound by residues 299 to 305 and serine 329; that span reads QGVELGT. Serine 329 acts as the Proton acceptor in catalysis. Lysine 389 carries the N6-acetyllysine modification. Histidine 423 lines the malonyl-CoA pocket. The Proton donor role is filled by histidine 423. Lysine 472 carries the post-translational modification N6-acetyllysine. The Microbody targeting signal motif lies at 491–493; it reads SKL.

In terms of assembly, homotetramer. Dimer of dimers. The two subunits within a dimer display conformational differences suggesting that at any given moment, only one of the two subunits is competent for malonyl-CoA binding and catalytic activity. Under oxidizing conditions, can form disulfide-linked homotetramers (in vitro). Associates with the peroxisomal targeting signal receptor PEX5. Acetylation at Lys-472 activates malonyl-CoA decarboxylase activity. Deacetylation at Lys-472 by SIRT4 represses activity, leading to promote lipogenesis. In terms of processing, interchain disulfide bonds may form in peroxisomes (Potential). Interchain disulfide bonds are not expected to form in the reducing environment of the cytoplasm and mitochondria. As to expression, expressed in fibroblasts and hepatoblastoma cells (at protein level). Expressed strongly in heart, liver, skeletal muscle, kidney and pancreas. Expressed in myotubes. Expressed weakly in brain, placenta, spleen, thymus, testis, ovary and small intestine.

The protein localises to the cytoplasm. It localises to the mitochondrion matrix. It is found in the peroxisome. Its subcellular location is the peroxisome matrix. It catalyses the reaction malonyl-CoA + H(+) = acetyl-CoA + CO2. The protein operates within metabolic intermediate biosynthesis; acetyl-CoA biosynthesis; acetyl-CoA from malonyl-CoA: step 1/1. Its activity is regulated as follows. Malonyl-CoA decarboxylase activity does not require any cofactors or divalent metal ions. Formation of interchain disulfide bonds leads to positive cooperativity between active sites and increases the affinity for malonyl-CoA and the catalytic efficiency (in vitro). Functionally, catalyzes the conversion of malonyl-CoA to acetyl-CoA. In the fatty acid biosynthesis MCD selectively removes malonyl-CoA and thus assures that methyl-malonyl-CoA is the only chain elongating substrate for fatty acid synthase and that fatty acids with multiple methyl side chains are produced. In peroxisomes it may be involved in degrading intraperoxisomal malonyl-CoA, which is generated by the peroxisomal beta-oxidation of odd chain-length dicarboxylic fatty acids. Plays a role in the metabolic balance between glucose and lipid oxidation in muscle independent of alterations in insulin signaling. May play a role in controlling the extent of ischemic injury by promoting glucose oxidation. This chain is Malonyl-CoA decarboxylase, mitochondrial, found in Homo sapiens (Human).